The following is a 300-amino-acid chain: N-acetylmuramic acid 6-phosphate etherase (300 aa).

Residues 57–220 enclose the SIS domain; sequence VSAAFARQGR…SSAAMIRSGK (164 aa). E85 (proton donor) is an active-site residue. E116 is an active-site residue.

This sequence belongs to the GCKR-like family. MurNAc-6-P etherase subfamily. As to quaternary structure, homodimer.

The enzyme catalyses N-acetyl-D-muramate 6-phosphate + H2O = N-acetyl-D-glucosamine 6-phosphate + (R)-lactate. The protein operates within amino-sugar metabolism; N-acetylmuramate degradation. It participates in amino-sugar metabolism; 1,6-anhydro-N-acetylmuramate degradation. Its pathway is cell wall biogenesis; peptidoglycan recycling. Specifically catalyzes the cleavage of the D-lactyl ether substituent of MurNAc 6-phosphate, producing GlcNAc 6-phosphate and D-lactate. Together with AnmK, is also required for the utilization of anhydro-N-acetylmuramic acid (anhMurNAc) either imported from the medium or derived from its own cell wall murein, and thus plays a role in cell wall recycling. This is N-acetylmuramic acid 6-phosphate etherase from Edwardsiella ictaluri (strain 93-146).